We begin with the raw amino-acid sequence, 346 residues long: Phosphate acyltransferase (346 aa).

It belongs to the PlsX family. Homodimer. Probably interacts with PlsY.

It localises to the cytoplasm. The enzyme catalyses a fatty acyl-[ACP] + phosphate = an acyl phosphate + holo-[ACP]. It participates in lipid metabolism; phospholipid metabolism. In terms of biological role, catalyzes the reversible formation of acyl-phosphate (acyl-PO(4)) from acyl-[acyl-carrier-protein] (acyl-ACP). This enzyme utilizes acyl-ACP as fatty acyl donor, but not acyl-CoA. The polypeptide is Phosphate acyltransferase (Brucella suis biovar 1 (strain 1330)).